Reading from the N-terminus, the 426-residue chain is Enolase (426 aa).

A (2R)-2-phosphoglycerate-binding site is contributed by Gln165. Glu207 serves as the catalytic Proton donor. Mg(2+) contacts are provided by Asp244, Glu285, and Asp312. Residues Lys337, Arg366, Ser367, and Lys388 each coordinate (2R)-2-phosphoglycerate. Residue Lys337 is the Proton acceptor of the active site.

It belongs to the enolase family. The cofactor is Mg(2+).

Its subcellular location is the cytoplasm. It is found in the secreted. The protein resides in the cell surface. The enzyme catalyses (2R)-2-phosphoglycerate = phosphoenolpyruvate + H2O. It participates in carbohydrate degradation; glycolysis; pyruvate from D-glyceraldehyde 3-phosphate: step 4/5. Its function is as follows. Catalyzes the reversible conversion of 2-phosphoglycerate (2-PG) into phosphoenolpyruvate (PEP). It is essential for the degradation of carbohydrates via glycolysis. The protein is Enolase of Thermosynechococcus vestitus (strain NIES-2133 / IAM M-273 / BP-1).